The primary structure comprises 571 residues: Glutamine--tRNA ligase (571 aa).

Residues 35–45 carry the 'HIGH' region motif; that stretch reads PEPNGYLHIGH. Residues 36–38 and 42–48 each bind ATP; these read EPN and HIGHAKS. L-glutamine contacts are provided by aspartate 68 and tyrosine 213. Residues threonine 232, 262–263, and 270–272 contribute to the ATP site; these read RL and LSK. Positions 269–273 match the 'KMSKS' region motif; sequence ILSKR.

Belongs to the class-I aminoacyl-tRNA synthetase family. In terms of assembly, monomer.

Its subcellular location is the cytoplasm. The enzyme catalyses tRNA(Gln) + L-glutamine + ATP = L-glutaminyl-tRNA(Gln) + AMP + diphosphate. The protein is Glutamine--tRNA ligase of Buchnera aphidicola subsp. Acyrthosiphon pisum (strain 5A).